A 185-amino-acid polypeptide reads, in one-letter code: MRRKVRRLTLAVSALVALFPAVAGCSDSGDNKPGATIPSTPANAEGRHGPFFPQCGGVSDQTVTELTRVTGLVNTAKNSVGCQWLAGGGILGPHFSFSWYRGSPIGRERKTEELSRASVEDINIDGHSGFIAIGNEPSLGDSLCEVGIQFSDDFIEWSVSFSQKPFPLPCDIAKELTRQSIANSK.

Residues 1-24 (MRRKVRRLTLAVSALVALFPAVAG) form the signal peptide. Cysteine 25 carries N-palmitoyl cysteine lipidation. Cysteine 25 carries S-diacylglycerol cysteine lipidation. Residues 26–50 (SDSGDNKPGATIPSTPANAEGRHGP) are disordered.

Its subcellular location is the cell membrane. The protein is Putative lipoprotein LprB (lprB) of Mycobacterium tuberculosis (strain CDC 1551 / Oshkosh).